A 755-amino-acid chain; its full sequence is Exocyst complex component 3 (755 aa).

Lysine 38 is modified (N6-acetyllysine).

It belongs to the SEC6 family. As to quaternary structure, the exocyst complex is composed of EXOC1, EXOC2, EXOC3, EXOC4, EXOC5, EXOC6, EXOC7 and EXOC8. Interacts with EXOC3L1. Interacts with BIRC6/bruce. Interacts with MYRIP. Interacts with SLC6A9.

The protein localises to the cytoplasm. Its subcellular location is the perinuclear region. The protein resides in the cell projection. It localises to the growth cone. It is found in the midbody. The protein localises to the golgi apparatus. Its subcellular location is the neuron projection. Component of the exocyst complex involved in the docking of exocytic vesicles with fusion sites on the plasma membrane. The chain is Exocyst complex component 3 (Exoc3) from Mus musculus (Mouse).